The following is a 97-amino-acid chain: Sperm protein associated with the nucleus on the X chromosome A (97 aa).

Positions 1-49 (MDKQSSAGGVKRSVPCDSNEANEMMPETPTGDSDPQPAPKKMKTSESST) are disordered. Residues 37–45 (PAPKKMKTS) carry the Nuclear localization signal motif.

The protein belongs to the SPAN-X family. As to expression, detected in testis and sperm.

The protein resides in the cytoplasm. The protein localises to the nucleus. This Homo sapiens (Human) protein is Sperm protein associated with the nucleus on the X chromosome A.